A 71-amino-acid chain; its full sequence is Small ribosomal subunit protein eS17 (71 aa).

It belongs to the eukaryotic ribosomal protein eS17 family.

This is Small ribosomal subunit protein eS17 from Pyrobaculum islandicum (strain DSM 4184 / JCM 9189 / GEO3).